A 342-amino-acid polypeptide reads, in one-letter code: Fructose-1,6-bisphosphatase class 1 (342 aa).

4 residues coordinate Mg(2+): E97, D119, L121, and D122. Residues 122-125 (DGSS), N215, Y247, and K280 each bind substrate. E286 contributes to the Mg(2+) binding site.

It belongs to the FBPase class 1 family. Homotetramer. Requires Mg(2+) as cofactor.

The protein resides in the cytoplasm. It carries out the reaction beta-D-fructose 1,6-bisphosphate + H2O = beta-D-fructose 6-phosphate + phosphate. The protein operates within carbohydrate biosynthesis; gluconeogenesis. The polypeptide is Fructose-1,6-bisphosphatase class 1 (Leptospira borgpetersenii serovar Hardjo-bovis (strain JB197)).